Reading from the N-terminus, the 364-residue chain is Dihydroorotate dehydrogenase (quinone) (364 aa).

FMN is bound by residues 61 to 65 (AGFDK) and threonine 85. Lysine 65 lines the substrate pocket. Residue 110 to 114 (NRMGF) coordinates substrate. FMN is bound by residues asparagine 139 and asparagine 170. Asparagine 170 lines the substrate pocket. Serine 173 serves as the catalytic Nucleophile. Residue asparagine 175 participates in substrate binding. 2 residues coordinate FMN: lysine 214 and alanine 242. Residue 243 to 244 (NT) coordinates substrate. FMN is bound by residues glycine 266, glycine 295, and 316-317 (YS).

This sequence belongs to the dihydroorotate dehydrogenase family. Type 2 subfamily. Monomer. FMN is required as a cofactor.

It is found in the cell membrane. The enzyme catalyses (S)-dihydroorotate + a quinone = orotate + a quinol. It participates in pyrimidine metabolism; UMP biosynthesis via de novo pathway; orotate from (S)-dihydroorotate (quinone route): step 1/1. In terms of biological role, catalyzes the conversion of dihydroorotate to orotate with quinone as electron acceptor. The polypeptide is Dihydroorotate dehydrogenase (quinone) (Rhodopseudomonas palustris (strain BisA53)).